Consider the following 496-residue polypeptide: Glutamyl-tRNA(Gln) amidotransferase subunit A (496 aa).

Active-site charge relay system residues include K75 and S150. Residue S174 is the Acyl-ester intermediate of the active site.

The protein belongs to the amidase family. GatA subfamily. Heterotrimer of A, B and C subunits.

The catalysed reaction is L-glutamyl-tRNA(Gln) + L-glutamine + ATP + H2O = L-glutaminyl-tRNA(Gln) + L-glutamate + ADP + phosphate + H(+). Its function is as follows. Allows the formation of correctly charged Gln-tRNA(Gln) through the transamidation of misacylated Glu-tRNA(Gln) in organisms which lack glutaminyl-tRNA synthetase. The reaction takes place in the presence of glutamine and ATP through an activated gamma-phospho-Glu-tRNA(Gln). This is Glutamyl-tRNA(Gln) amidotransferase subunit A from Burkholderia cenocepacia (strain HI2424).